The sequence spans 320 residues: Pseudouridine-5'-phosphate glycosidase (320 aa).

The Proton donor role is filled by E25. K85 and V105 together coordinate substrate. Residue D137 participates in Mn(2+) binding. 139-141 (SAD) is a binding site for substrate. K158 serves as the catalytic Nucleophile.

This sequence belongs to the pseudouridine-5'-phosphate glycosidase family. In terms of assembly, homotrimer. Mn(2+) is required as a cofactor.

It carries out the reaction D-ribose 5-phosphate + uracil = psi-UMP + H2O. Its function is as follows. Catalyzes the reversible cleavage of pseudouridine 5'-phosphate (PsiMP) to ribose 5-phosphate and uracil. Functions biologically in the cleavage direction, as part of a pseudouridine degradation pathway. In Rhodospirillum centenum (strain ATCC 51521 / SW), this protein is Pseudouridine-5'-phosphate glycosidase.